The chain runs to 299 residues: Oxygen-dependent coproporphyrinogen-III oxidase (299 aa).

Ser-92 contacts substrate. A divalent metal cation contacts are provided by His-96 and His-106. The Proton donor role is filled by His-106. 108–110 lines the substrate pocket; it reads NVR. A divalent metal cation contacts are provided by His-145 and His-175. Positions 239-274 are important for dimerization; it reads YVEFNLVYDRGTLFGLQSGGRAESILMSLPPRVRWE. 257–259 is a substrate binding site; it reads GGR.

Belongs to the aerobic coproporphyrinogen-III oxidase family. Homodimer. The cofactor is a divalent metal cation.

It localises to the cytoplasm. It carries out the reaction coproporphyrinogen III + O2 + 2 H(+) = protoporphyrinogen IX + 2 CO2 + 2 H2O. It participates in porphyrin-containing compound metabolism; protoporphyrin-IX biosynthesis; protoporphyrinogen-IX from coproporphyrinogen-III (O2 route): step 1/1. Its function is as follows. Involved in the heme biosynthesis. Catalyzes the aerobic oxidative decarboxylation of propionate groups of rings A and B of coproporphyrinogen-III to yield the vinyl groups in protoporphyrinogen-IX. The sequence is that of Oxygen-dependent coproporphyrinogen-III oxidase from Xanthomonas oryzae pv. oryzae (strain MAFF 311018).